Consider the following 156-residue polypeptide: ATP synthase subunit b (156 aa).

Residues 11–31 (AIAFVLFVLFCMKYVWPPIMA) form a helical membrane-spanning segment.

This sequence belongs to the ATPase B chain family. F-type ATPases have 2 components, F(1) - the catalytic core - and F(0) - the membrane proton channel. F(1) has five subunits: alpha(3), beta(3), gamma(1), delta(1), epsilon(1). F(0) has three main subunits: a(1), b(2) and c(10-14). The alpha and beta chains form an alternating ring which encloses part of the gamma chain. F(1) is attached to F(0) by a central stalk formed by the gamma and epsilon chains, while a peripheral stalk is formed by the delta and b chains.

It localises to the cell inner membrane. Its function is as follows. F(1)F(0) ATP synthase produces ATP from ADP in the presence of a proton or sodium gradient. F-type ATPases consist of two structural domains, F(1) containing the extramembraneous catalytic core and F(0) containing the membrane proton channel, linked together by a central stalk and a peripheral stalk. During catalysis, ATP synthesis in the catalytic domain of F(1) is coupled via a rotary mechanism of the central stalk subunits to proton translocation. Component of the F(0) channel, it forms part of the peripheral stalk, linking F(1) to F(0). This is ATP synthase subunit b from Cronobacter sakazakii (strain ATCC BAA-894) (Enterobacter sakazakii).